Reading from the N-terminus, the 139-residue chain is ATP synthase epsilon chain (139 aa).

The protein belongs to the ATPase epsilon chain family. F-type ATPases have 2 components, CF(1) - the catalytic core - and CF(0) - the membrane proton channel. CF(1) has five subunits: alpha(3), beta(3), gamma(1), delta(1), epsilon(1). CF(0) has three main subunits: a, b and c.

Its subcellular location is the cell inner membrane. Its function is as follows. Produces ATP from ADP in the presence of a proton gradient across the membrane. The sequence is that of ATP synthase epsilon chain from Acinetobacter baumannii (strain AB307-0294).